We begin with the raw amino-acid sequence, 199 residues long: MSTHILLASGSEIRAKLLRQAGVDFRVEVARVDEDAIKTALEADGASPRDIADTLAEAKARKVSGKFPEEMVLGCDQVLDFEGTLLSKPKDKNQALQQLKAMRGKRHMLLSAAVIYCDAKPLWRHVGQVRLVMRMASDAYLESYVERNWESIRHAVGAYKLEEEGVRLFTTIDGSYFNVLGLPMLELMNYLGLQGIIEQ.

Aspartate 76 serves as the catalytic Proton acceptor.

The protein belongs to the Maf family. A divalent metal cation is required as a cofactor.

It is found in the cytoplasm. It carries out the reaction a ribonucleoside 5'-triphosphate + H2O = a ribonucleoside 5'-phosphate + diphosphate + H(+). The catalysed reaction is a 2'-deoxyribonucleoside 5'-triphosphate + H2O = a 2'-deoxyribonucleoside 5'-phosphate + diphosphate + H(+). In terms of biological role, nucleoside triphosphate pyrophosphatase. May have a dual role in cell division arrest and in preventing the incorporation of modified nucleotides into cellular nucleic acids. The polypeptide is Nucleoside triphosphate pyrophosphatase (Ruegeria sp. (strain TM1040) (Silicibacter sp.)).